The chain runs to 883 residues: Bifunctional heparan sulfate N-deacetylase/N-sulfotransferase 2 (883 aa).

Over M1–R18 the chain is Cytoplasmic. Residues L19–S39 form a helical; Signal-anchor for type II membrane protein membrane-spanning segment. Residues T40–G883 are Lumenal-facing. Positions S41 to E597 are heparan sulfate N-deacetylase 2. A disordered region spans residues P49–A81. Positions P65–P78 are enriched in pro residues. N233, N350, and N400 each carry an N-linked (GlcNAc...) asparagine glycan. Positions K598–G883 are heparan sulfate N-sulfotransferase 2. K613 functions as the For sulfotransferase activity in the catalytic mechanism. 3'-phosphoadenylyl sulfate is bound at residue K613–T617. Residue N666 is glycosylated (N-linked (GlcNAc...) asparagine). Position 711 (S711) interacts with 3'-phosphoadenylyl sulfate. N726 and N802 each carry an N-linked (GlcNAc...) asparagine glycan. A disulfide bridge connects residues C817 and C827. K832–Y836 contributes to the 3'-phosphoadenylyl sulfate binding site.

It belongs to the sulfotransferase 1 family. NDST subfamily. Monomer.

It is found in the golgi apparatus membrane. It catalyses the reaction alpha-D-glucosaminyl-[heparan sulfate](n) + 3'-phosphoadenylyl sulfate = N-sulfo-alpha-D-glucosaminyl-[heparan sulfate](n) + adenosine 3',5'-bisphosphate + 2 H(+). Its pathway is glycan metabolism; heparan sulfate biosynthesis. It participates in glycan metabolism; heparin biosynthesis. Functionally, essential bifunctional enzyme that catalyzes both the N-deacetylation and the N-sulfation of glucosamine (GlcNAc) of the glycosaminoglycan in heparan sulfate. Modifies the GlcNAc-GlcA disaccharide repeating sugar backbone to make N-sulfated heparosan, a prerequisite substrate for later modifications in heparin biosynthesis. Plays a role in determining the extent and pattern of sulfation of heparan sulfate. Required for the exosomal release of SDCBP, CD63 and syndecan. The sequence is that of Bifunctional heparan sulfate N-deacetylase/N-sulfotransferase 2 (NDST2) from Homo sapiens (Human).